The following is a 400-amino-acid chain: Protein phyllopod (400 aa).

Residues 109 to 127 (QERTKLRPVAMVRPTVRVQ) are interaction with sina. The tract at residues 125 to 145 (RVQPQSQPQLQPQVPINPTPA) is disordered. Residues 127 to 138 (QPQSQPQLQPQV) are compositionally biased toward low complexity. Residues 241–320 (YQRFPQPSVD…TAISEVLPTA (80 aa)) are interaction with ttk. A coiled-coil region spans residues 319–362 (TARYQVTHEENKENQQAQEMELELEEEEEVDGRAELEVVQEAEA). Residues 346 to 382 (EEVDGRAELEVVQEAEAPLEPQSHHKQGNSHQNSHQA) are disordered.

As to quaternary structure, component of some E3 complex at least composed of sina, ebi and phyl, required for the degradation of ttk. As to expression, in embryos, it is ubiquitously present before cellularization. During stages 9-11, it is expressed in neuroblasts and the SOP cells. From stage 12 onward, it decreases, but remains in a subset of PNS cells at stages 12-14. Weakly expressed in wing imaginal disks, in the SOP cells of wing margin bristles, notal macrochaetes, and other sensory organs. In leg disks, it is expressed in the precursors of the femoral chordotonal organs, as well as in external sensory SOP cells. Strongly expressed in the eye-antenna disk, it is specifically expressed in R1, R6 and R7 cells, and not in R3, R3, R4, R5 and R8 cells.

Its subcellular location is the nucleus. Essential adapter component of E3 ubiquitin ligase complexes; involved in R7 photoreceptor cell differentiation, embryonic nervous system, external sensory organ development and specification of particular muscles. E3 ubiquitin ligase complexes mediate ubiquitination and subsequent proteasomal degradation of target proteins. Required for specification of R7 photoreceptor cell fate in the eye by participating in the ubiquitination and subsequent proteasomal degradation of Tramtrack (ttk), a general inhibitor of photoreceptor differentiation. Acts downstream of Notch signaling to specify the fate of the SOP (sensory organ precursor) cells and their progeny, probably via the sina-mediated proteasomal degradation of ttk. Its restricted pattern of expression, upon Notch and Ras signaling pathways, suggests that it acts as a key determinant in E3 complexes to trigger protein proteolysis in appropriate cells. In Drosophila melanogaster (Fruit fly), this protein is Protein phyllopod (phyl).